A 562-amino-acid polypeptide reads, in one-letter code: Arylsulfatase H (562 aa).

Positions 15, 16, and 55 each coordinate Ca(2+). Catalysis depends on Cys55, which acts as the Nucleophile. Cys55 bears the 3-oxoalanine (Cys) mark. Lys115 contributes to the substrate binding site. His117 is a catalytic residue. Transmembrane regions (helical) follow at residues 167-187 (LWISTVALALVPFLLLIPKFA) and 189-209 (WFSVPWKVIFVFALLAFLFFT). Position 271 (His271) interacts with substrate. The Ca(2+) site is built by Asp323 and Asn324. Substrate is bound at residue Lys348.

This sequence belongs to the sulfatase family. Ca(2+) is required as a cofactor. In terms of processing, the conversion to 3-oxoalanine (also known as C-formylglycine, FGly), of a serine or cysteine residue in prokaryotes and of a cysteine residue in eukaryotes, is critical for catalytic activity.

It localises to the membrane. This Homo sapiens (Human) protein is Arylsulfatase H (ARSH).